The primary structure comprises 271 residues: MIRTVITGITGRMGSTLLRLALDSGDLRVVGGTARPGSASVGQDAGVATRLGPVDVTVVDSLERALDAAQADVVIDFTSAELSVAHAKVCAARGVALVVGSTGFTPEASAALAESAKAVPIVAAPNMSVGVNLVIRMAAELARVLGPGFDVEVLEAHHRMKKDAPSGTALRLAEVLTEALGRTQEDLTFARHGQIGARPAREIGVQTLRGGDVVGEHTVYFLGEGERIELTHRATNRDQFAAGALRAARWVAGRAPGLHDMADVLGFQRTS.

8–13 serves as a coordination point for NAD(+); the sequence is GITGRM. Arg35 contacts NADP(+). NAD(+)-binding positions include 100–102 and 124–127; these read GST and APNM. His157 functions as the Proton donor/acceptor in the catalytic mechanism. His158 provides a ligand contact to (S)-2,3,4,5-tetrahydrodipicolinate. The Proton donor role is filled by Lys161. 167-168 contacts (S)-2,3,4,5-tetrahydrodipicolinate; it reads GT.

This sequence belongs to the DapB family.

It localises to the cytoplasm. It carries out the reaction (S)-2,3,4,5-tetrahydrodipicolinate + NAD(+) + H2O = (2S,4S)-4-hydroxy-2,3,4,5-tetrahydrodipicolinate + NADH + H(+). It catalyses the reaction (S)-2,3,4,5-tetrahydrodipicolinate + NADP(+) + H2O = (2S,4S)-4-hydroxy-2,3,4,5-tetrahydrodipicolinate + NADPH + H(+). It participates in amino-acid biosynthesis; L-lysine biosynthesis via DAP pathway; (S)-tetrahydrodipicolinate from L-aspartate: step 4/4. Catalyzes the conversion of 4-hydroxy-tetrahydrodipicolinate (HTPA) to tetrahydrodipicolinate. In Myxococcus xanthus (strain DK1622), this protein is 4-hydroxy-tetrahydrodipicolinate reductase.